Consider the following 797-residue polypeptide: Adhesion G-protein coupled receptor G7 (797 aa).

The N-terminal stretch at 1 to 26 is a signal peptide; it reads MASCRAWNLRVLVAVVCGLLTGIILG. At 27–438 the chain is on the extracellular side; the sequence is LGIWRIVIRI…QYPKSLDILS (412 aa). Residues Asn-82, Asn-159, Asn-178, Asn-191, Asn-247, Asn-261, Asn-312, Asn-316, and Asn-387 are each glycosylated (N-linked (GlcNAc...) asparagine). The GAIN-B domain occupies 275-428; the sequence is FSVQKGASSS…AVLMTFKKDY (154 aa). Intrachain disulfides connect Cys-383/Cys-410 and Cys-398/Cys-412. Positions 383–428 are GPS; that stretch reads CVYWNLSAKDWDTYGCQKDKGTDGFLRCRCNHTTNFAVLMTFKKDY. Residue Asn-413 is glycosylated (N-linked (GlcNAc...) asparagine). Residues 439 to 459 form a helical membrane-spanning segment; the sequence is NVGCALSVTGLALTVIFQIVT. The Cytoplasmic portion of the chain corresponds to 460-468; sequence RKVRKTSVT. The helical transmembrane segment at 469 to 489 threads the bilayer; the sequence is WVLVNLCISMLIFNLLFVFGI. Residues 490–528 are Extracellular-facing; that stretch reads ENSNKNLQTSDGDINNIDFDNNDIPRTDTINIPNPMCTA. Residues 529–549 form a helical membrane-spanning segment; sequence IAALLHYFLLVTFTWNALSAA. Residues 550–565 are Cytoplasmic-facing; the sequence is QLYYLLIRTMKPLPRH. The chain crosses the membrane as a helical span at residues 566 to 586; the sequence is FILFISLIGWGVPAIVVAITV. The Extracellular segment spans residues 587–623; sequence GVIYSQNGNNPQWELDYRQEKICWLAIPEPNGVIKSP. The helical transmembrane segment at 624–644 threads the bilayer; that stretch reads LLWSFIVPVTIILISNVVMFI. At 645 to 669 the chain is on the cytoplasmic side; the sequence is TISIKVLWKNNQNLTSTKKVSSMKK. The helical transmembrane segment at 670–690 threads the bilayer; the sequence is IVSTLSVAVVFGITWILAYLM. Residues 691–698 lie on the Extracellular side of the membrane; it reads LVNDDSIR. The helical transmembrane segment at 699–719 threads the bilayer; the sequence is IVFSYIFCLFNTTQGLQIFIL. At 720-797 the chain is on the cytoplasmic side; the sequence is YTVRTKVFQS…SESDNAKESI (78 aa).

It belongs to the G-protein coupled receptor 2 family. Adhesion G-protein coupled receptor (ADGR) subfamily.

It is found in the membrane. Orphan receptor. This Homo sapiens (Human) protein is Adhesion G-protein coupled receptor G7 (ADGRG7).